A 600-amino-acid polypeptide reads, in one-letter code: Aspartate--tRNA(Asp/Asn) ligase (600 aa).

Residue E187 coordinates L-aspartate. Residues 211–214 form an aspartate region; the sequence is QIFK. Positions 233 and 463 each coordinate L-aspartate. ATP is bound at residue 233–235; that stretch reads RDE. Residue E497 participates in ATP binding. R504 lines the L-aspartate pocket. 549–552 is an ATP binding site; sequence GIDR.

It belongs to the class-II aminoacyl-tRNA synthetase family. Type 1 subfamily. Homodimer.

The protein localises to the cytoplasm. The enzyme catalyses tRNA(Asx) + L-aspartate + ATP = L-aspartyl-tRNA(Asx) + AMP + diphosphate. Its function is as follows. Aspartyl-tRNA synthetase with relaxed tRNA specificity since it is able to aspartylate not only its cognate tRNA(Asp) but also tRNA(Asn). Reaction proceeds in two steps: L-aspartate is first activated by ATP to form Asp-AMP and then transferred to the acceptor end of tRNA(Asp/Asn). This chain is Aspartate--tRNA(Asp/Asn) ligase, found in Wolbachia sp. subsp. Brugia malayi (strain TRS).